A 555-amino-acid chain; its full sequence is MAPAAALMSKCQEEEEIVRPVADFSPSLWGDRFHSFSLDNQVAEKYVEEIETLKEQTRSMLMSGKTLAEKLNLIDIVERLGIAYHFEKQIDDMLNHIFNIDPNFEAHEYNDLCTLSLQFRILRQHGYYISPKIFSRFQDANGKFKESLCDDIRGILNLYEASHVRTHGEDTLEEALAFSTAHLESAAPHLKSPLSKQVTHALEQSLHKSIPRVETRYFISIYEEEELKNDVFLRFAKLDFNLLQMLHKQELSEVSRWWKDLDFVTTLPYARDRAVECYFWTMGVYAEPQYSQARVMLAKTIAMISIVDDTFDAYGIVKELEVYTDAIQRWDVSQIDRLPEYMKISYKALLDLYNDYETELSNDGRSDVVQYAKERMKEIVRNYFVEAKWFIEGYMPPVSEYLSNALATSTYYLLTTTSYLGMKSATKKDFEWLAKNPKILEANVTLCRVIDDIATYEVEKGRGQIATGIECYMRDYGVSTQVAMDKFQEMAETAWKDVNEGILRPTPVSAKILTRILNLARIIDVTYKHNQDGYTHPEKVLKPHIIALLVDSIEI.

Mg(2+) is bound by residues D308, D312, D451, T455, and E459. Positions 308–312 match the DDXXD motif motif; that stretch reads DDTFD.

It belongs to the terpene synthase family. Tpsa subfamily. It depends on Mg(2+) as a cofactor. The cofactor is Mn(2+). Expressed in stem and leaf trichomes. Detected in roots, fruits and flowers.

Its subcellular location is the cytoplasm. The catalysed reaction is (2E,6E)-farnesyl diphosphate = viridiflorene + diphosphate. The protein operates within secondary metabolite biosynthesis; terpenoid biosynthesis. Functionally, sesquiterpene synthase involved in the production of viridiflorene from (E,E)-farnesyl diphosphate (FPP). Has no activity with (Z,Z)-FPP. Can act with a low efficiency as a monoterpene synthase with geranyl diphosphate as substrate. This is Sesquiterpene synthase 31 from Solanum lycopersicum (Tomato).